Reading from the N-terminus, the 375-residue chain is Leucoanthocyanidin dioxygenase 1 (375 aa).

One can recognise a Fe2OG dioxygenase domain in the interval 218 to 317; the sequence is LLLQLKINYY…RLSWVVFCEP (100 aa). 3 residues coordinate Fe cation: H242, D244, and H298. R308 provides a ligand contact to 2-oxoglutarate.

Belongs to the iron/ascorbate-dependent oxidoreductase family. The cofactor is L-ascorbate. Fe(2+) serves as cofactor.

It catalyses the reaction a (2R,3S,4S)-leucoanthocyanidin + 2-oxoglutarate + O2 = a 4-H-anthocyanidin with a 3-hydroxy group + succinate + CO2 + 2 H2O. Its pathway is pigment biosynthesis; anthocyanin biosynthesis. Involved in anthocyanin and protoanthocyanidin biosynthesis by catalyzing the oxidation of leucoanthocyanidins into anthocyanidins. Is able to synthesize anthocyanin pigments from leucoanthocyanidins in aleurone tissue. Converts dihydroquercetin to quercetin in vitro. The protein is Leucoanthocyanidin dioxygenase 1 of Oryza sativa subsp. indica (Rice).